We begin with the raw amino-acid sequence, 245 residues long: tRNA pseudouridine synthase A (245 aa).

D52 acts as the Nucleophile in catalysis. Y111 is a binding site for substrate.

The protein belongs to the tRNA pseudouridine synthase TruA family. In terms of assembly, homodimer.

The catalysed reaction is uridine(38/39/40) in tRNA = pseudouridine(38/39/40) in tRNA. Functionally, formation of pseudouridine at positions 38, 39 and 40 in the anticodon stem and loop of transfer RNAs. This Wolbachia pipientis wMel protein is tRNA pseudouridine synthase A.